Here is a 202-residue protein sequence, read N- to C-terminus: 3-isopropylmalate dehydratase small subunit (202 aa).

The protein belongs to the LeuD family. LeuD type 1 subfamily. In terms of assembly, heterodimer of LeuC and LeuD.

The enzyme catalyses (2R,3S)-3-isopropylmalate = (2S)-2-isopropylmalate. The protein operates within amino-acid biosynthesis; L-leucine biosynthesis; L-leucine from 3-methyl-2-oxobutanoate: step 2/4. Its function is as follows. Catalyzes the isomerization between 2-isopropylmalate and 3-isopropylmalate, via the formation of 2-isopropylmaleate. The protein is 3-isopropylmalate dehydratase small subunit of Novosphingobium aromaticivorans (strain ATCC 700278 / DSM 12444 / CCUG 56034 / CIP 105152 / NBRC 16084 / F199).